The chain runs to 374 residues: Tomoregulin-2 (374 aa).

The first 39 residues, 1–39, serve as a signal peptide directing secretion; sequence MVLWESPRQCSSWTLCEGFCWLLLLPVMLLIVARPVKLA. The Extracellular portion of the chain corresponds to 40 to 320; it reads AFPTSLSDCQ…VPGPVRFQYV (281 aa). A glycan (N-linked (GlcNAc...) asparagine) is linked at asparagine 55. Kazal-like domains are found at residues 90-137 and 181-229; these read VCQF…SCAT and VCNI…RCQD. Intrachain disulfides connect cysteine 91–cysteine 121, cysteine 95–cysteine 114, cysteine 103–cysteine 135, cysteine 182–cysteine 213, cysteine 186–cysteine 206, cysteine 195–cysteine 227, cysteine 265–cysteine 278, cysteine 273–cysteine 289, and cysteine 291–cysteine 300. The EGF-like domain maps to 261–301; the sequence is HHIPCPEHYNGFCMHGKCEHSINMQEPSCRCDAGYTGQHCE. The interval 303–320 is required for shedding; it reads KDYSVLYVVPGPVRFQYV. A helical membrane pass occupies residues 321–341; that stretch reads LIAAVIGTIQIAVICVVVLCI. Residues 342 to 374 lie on the Cytoplasmic side of the membrane; that stretch reads TRKCPRSNRIHRQKQNTGHYSSDNTTRASTRLI. The interval 353–374 is disordered; it reads RQKQNTGHYSSDNTTRASTRLI. A compositionally biased stretch (polar residues) spans 356 to 374; sequence QNTGHYSSDNTTRASTRLI.

This sequence belongs to the tomoregulin family. In terms of processing, O-glycosylated; contains chondroitin sulfate glycosaminoglycans. A soluble form (TMEFF2-ECD) is produced by proteolytic shedding. This shedding can be induced by phorbol ester or pro-inflammatory cytokines such as TNFalpha, and is mediated by a metalloproteinase ADAM.

It localises to the membrane. Functionally, may be a survival factor for hippocampal and mesencephalic neurons. The shedded form may up-regulate cell proliferation. This chain is Tomoregulin-2 (TMEFF2), found in Bos taurus (Bovine).